We begin with the raw amino-acid sequence, 62 residues long: Omega-conotoxin-like Bu11 (62 aa).

The first 7 residues, 1–7, serve as a signal peptide directing secretion; the sequence is ACQLITA. Positions 8–27 are excised as a propeptide; sequence EDSRGTQLHRALRSTSKVSK. 3 cysteine pairs are disulfide-bonded: Cys-31/Cys-46, Cys-38/Cys-49, and Cys-45/Cys-56.

The protein belongs to the conotoxin O1 superfamily. As to expression, expressed by the venom duct.

The protein localises to the secreted. Its function is as follows. Omega-conotoxins act at presynaptic membranes, they bind and block voltage-gated calcium channels (Cav). This is Omega-conotoxin-like Bu11 from Conus bullatus (Bubble cone).